Reading from the N-terminus, the 728-residue chain is 1,4-alpha-glucan branching enzyme GlgB (728 aa).

The Nucleophile role is filled by Asp405. Residue Glu458 is the Proton donor of the active site.

The protein belongs to the glycosyl hydrolase 13 family. GlgB subfamily. Monomer.

It carries out the reaction Transfers a segment of a (1-&gt;4)-alpha-D-glucan chain to a primary hydroxy group in a similar glucan chain.. The protein operates within glycan biosynthesis; glycogen biosynthesis. Functionally, catalyzes the formation of the alpha-1,6-glucosidic linkages in glycogen by scission of a 1,4-alpha-linked oligosaccharide from growing alpha-1,4-glucan chains and the subsequent attachment of the oligosaccharide to the alpha-1,6 position. This is 1,4-alpha-glucan branching enzyme GlgB from Escherichia coli O1:K1 / APEC.